The primary structure comprises 126 residues: Small ribosomal subunit protein uS13 (126 aa).

The disordered stretch occupies residues 96-126 (PVRGQRTRTNARTRRGSRRTVAGKKKPAAKK). Residues 100–126 (QRTRTNARTRRGSRRTVAGKKKPAAKK) show a composition bias toward basic residues.

Belongs to the universal ribosomal protein uS13 family. As to quaternary structure, part of the 30S ribosomal subunit. Forms a loose heterodimer with protein S19. Forms two bridges to the 50S subunit in the 70S ribosome.

Its function is as follows. Located at the top of the head of the 30S subunit, it contacts several helices of the 16S rRNA. In the 70S ribosome it contacts the 23S rRNA (bridge B1a) and protein L5 of the 50S subunit (bridge B1b), connecting the 2 subunits; these bridges are implicated in subunit movement. Contacts the tRNAs in the A and P-sites. This chain is Small ribosomal subunit protein uS13, found in Thermosynechococcus vestitus (strain NIES-2133 / IAM M-273 / BP-1).